The following is a 569-amino-acid chain: 4-hydroxy-7-methoxy-3-oxo-3,4-dihydro-2H-1,4-benzoxazin-2-yl glucoside beta-D-glucosidase 1b, chloroplastic (569 aa).

The N-terminal 50 residues, 1 to 50 (MALLAAATLNPTTHLSLRSRAGRNSENLWLRSTASSQKSKGRFCNLTIRA), are a transit peptide targeting the chloroplast. A beta-D-glucoside contacts are provided by residues Gln-92, His-194, and 239 to 240 (NE). Glu-240 serves as the catalytic Proton donor. A disulfide bridge links Cys-259 with Cys-265. Residues Tyr-383, Glu-456, Trp-504, 511–512 (EW), and Phe-520 contribute to the a beta-D-glucoside site. Glu-456 (nucleophile) is an active-site residue.

Belongs to the glycosyl hydrolase 1 family. In terms of assembly, homo- and heterohexamers. As to expression, expressed in young seedlings early after germination.

The protein localises to the plastid. It is found in the chloroplast. The catalysed reaction is Hydrolysis of terminal, non-reducing beta-D-glucosyl residues with release of beta-D-glucose.. It catalyses the reaction DIMBOA beta-D-glucoside + H2O = DIMBOA + D-glucose. It carries out the reaction DIBOA beta-D-glucoside + H2O = DIBOA + D-glucose. In terms of biological role, acts in defense of young plant parts against pests via the production of hydroxamic acids from hydroxamic acid glucosides. Enzymatic activity is highly correlated with plant growth. The preferred substrate is DIMBOA-beta-D-glucoside. This chain is 4-hydroxy-7-methoxy-3-oxo-3,4-dihydro-2H-1,4-benzoxazin-2-yl glucoside beta-D-glucosidase 1b, chloroplastic (GLU1B), found in Triticum aestivum (Wheat).